We begin with the raw amino-acid sequence, 360 residues long: GDSL esterase/lipase At2g31540 (360 aa).

A signal peptide spans 1–23 (MSTSKAITLTLFIATTLLAPCNA). The Nucleophile role is filled by S42. 2 N-linked (GlcNAc...) asparagine glycosylation sites follow: N104 and N326. Active-site residues include D334 and H337.

This sequence belongs to the 'GDSL' lipolytic enzyme family.

It is found in the secreted. This is GDSL esterase/lipase At2g31540 from Arabidopsis thaliana (Mouse-ear cress).